The primary structure comprises 200 residues: Imidazoleglycerol-phosphate dehydratase (200 aa).

This sequence belongs to the imidazoleglycerol-phosphate dehydratase family.

The protein localises to the cytoplasm. It catalyses the reaction D-erythro-1-(imidazol-4-yl)glycerol 3-phosphate = 3-(imidazol-4-yl)-2-oxopropyl phosphate + H2O. Its pathway is amino-acid biosynthesis; L-histidine biosynthesis; L-histidine from 5-phospho-alpha-D-ribose 1-diphosphate: step 6/9. The sequence is that of Imidazoleglycerol-phosphate dehydratase from Leifsonia xyli subsp. xyli (strain CTCB07).